The sequence spans 473 residues: Phosphatidylserine synthase 1 (473 aa).

Ala-2 bears the N-acetylalanine mark. The Cytoplasmic portion of the chain corresponds to 2–35 (ASCVGSRTLSKDDVNYRMHFRMINEQQVEDITID). The chain crosses the membrane as a helical span at residues 36–56 (FFYRPHTITLLSFTIISLMYF). Topologically, residues 57–72 (AFTRDDSVPEDNIWRG) are lumenal. Residues 73-93 (ILSVIFFFLIISVLAFPNGPF) traverse the membrane as a helical segment. Topologically, residues 94 to 102 (TRPHPALWR) are cytoplasmic. A helical membrane pass occupies residues 103–123 (MVFGLSVLYFLFLVFLLFLNF). Topologically, residues 124–186 (EQVKSLMYWL…AMKALLIRSY (63 aa)) are lumenal. The helical transmembrane segment at 187–207 (GLCWTISITWELTELFFMHLL) threads the bilayer. Residues 208 to 216 (PNFAECWWD) lie on the Cytoplasmic side of the membrane. Residues 217-237 (QVILDILLCNGGGIWLGMVVC) form a helical membrane-spanning segment. At 238–286 (RFLEMRTYHWASFKDIHTTTGKIKRAVLQFTPASWTYVRWFDPKSSFQR) the chain is on the lumenal side. A helical membrane pass occupies residues 287–307 (VAGIYLFMIIWQLTELNTFFL). Residues 308–319 (KHIFVFQASHPL) lie on the Cytoplasmic side of the membrane. Residues 320–342 (SWGRILFIGCITAPTVRQYYAYL) form a helical membrane-spanning segment. Residues 343 to 355 (TDTQCKRVGTQCW) are Lumenal-facing. Residues 356-376 (VFGVIGFLEAIVCIKFGQDLF) form a helical membrane-spanning segment. At 377–383 (SKTQILY) the chain is on the cytoplasmic side. The helical transmembrane segment at 384–404 (VMLWLLCVAFTTFLCLYGMVW) threads the bilayer. Residues 405 to 473 (YAEHYGHREK…SKVTNGVGKK (69 aa)) are Lumenal-facing. 4 positions are modified to phosphoserine: Ser-417, Ser-425, Ser-442, and Ser-454. The disordered stretch occupies residues 428–473 (ISWHHGKGSKGSEDSPPKHSSNHESHSSRRRNRHSKSKVTNGVGKK). Residues 437–454 (KGSEDSPPKHSSNHESHS) show a composition bias toward basic and acidic residues. Residues 455–464 (SRRRNRHSKS) show a composition bias toward basic residues.

Belongs to the phosphatidyl serine synthase family. Expressed in kidney, testis, lung, skeletal muscle, liver brain, heart and spleen with highest expression in testis, liver, heart and brain.

It localises to the endoplasmic reticulum membrane. It carries out the reaction a 1,2-diacyl-sn-glycero-3-phosphoethanolamine + L-serine = a 1,2-diacyl-sn-glycero-3-phospho-L-serine + ethanolamine. It catalyses the reaction a 1,2-diacyl-sn-glycero-3-phosphocholine + L-serine = a 1,2-diacyl-sn-glycero-3-phospho-L-serine + choline. Its pathway is phospholipid metabolism; phosphatidylserine biosynthesis. With respect to regulation, potently inhibited by choline in the mitochondria-associated membrane (MAM). Very little inhibition by choline in the endoplasmic reticulum (ER) per se. Catalyzes a base-exchange reaction in which the polar head group of phosphatidylethanolamine (PE) or phosphatidylcholine (PC) is replaced by L-serine. Catalyzes mainly the conversion of phosphatidylcholine. Also converts, in vitro and to a lesser extent, phosphatidylethanolamine. The protein is Phosphatidylserine synthase 1 (Ptdss1) of Mus musculus (Mouse).